The following is a 417-amino-acid chain: Equilibrative nucleotide transporter 7 (417 aa).

Helical transmembrane passes span 19 to 39 (LVCC…LTIT), 54 to 74 (VLTI…ATKE), 84 to 104 (IFGY…DLAS), 110 to 130 (VVAY…DAFV), 143 to 163 (PDFI…TSVL), 184 to 204 (LFIG…TLVF), 264 to 284 (LGIN…GFLY), 293 to 315 (GDWY…RFIP), 326 to 346 (KWIT…YFTA), 353 to 373 (WMLF…VCIF), and 392 to 412 (MCVF…LWLI).

It belongs to the SLC29A/ENT transporter (TC 2.A.57) family. In terms of tissue distribution, expressed in leaves and flowers.

Its subcellular location is the cell membrane. In terms of biological role, nucleoside transporter that can mediate uptake of adenosine, uridine, guanosine or cytidine when expressed in a heterologous system (yeast). In Arabidopsis thaliana (Mouse-ear cress), this protein is Equilibrative nucleotide transporter 7 (ENT7).